We begin with the raw amino-acid sequence, 1347 residues long: BTB/POZ domain-containing protein 1 (1347 aa).

ANK repeat units lie at residues 51 to 81 (YGRTVLHIAVSENKNSFVRSLLQHKGIDVFV) and 86 to 115 (SGYTALHRAIYVGNLEAASLLLSKDPSFRS). RCC1 repeat units follow at residues 148 to 198 (GNEL…DKIL), 215 to 264 (SQNV…ALTK), 265 to 322 (FGSI…AWTD), and 324 to 372 (DIYS…CLLQ). BTB domains follow at residues 619 to 698 (SDVT…LSPW) and 758 to 829 (MDTV…VELF). Disordered stretches follow at residues 1006 to 1029 (SSNQSDSLNKEDAEEKSPKPNVVN), 1104 to 1139 (EKADASTTTVLSDSRFMKAPTKKSQREKKKELSKQV), 1193 to 1237 (EGSS…PLSI), and 1286 to 1347 (GILK…RAVK). The span at 1013–1023 (LNKEDAEEKSP) shows a compositional bias: basic and acidic residues. Polar residues-rich tracts occupy residues 1208–1237 (SNGSPTSWNLLTKPSPRSASLPKNSQPLSI) and 1297–1306 (NRKQGQASKQ). The segment covering 1336–1347 (TTHKKGKARAVK) has biased composition (basic residues).

As to quaternary structure, interacts with cul3.

It functions in the pathway protein modification; protein ubiquitination. Functionally, probable substrate-specific adapter of an E3 ubiquitin-protein ligase complex which mediates the ubiquitination and subsequent proteasomal degradation of target proteins. The polypeptide is BTB/POZ domain-containing protein 1 (btb1) (Schizosaccharomyces pombe (strain 972 / ATCC 24843) (Fission yeast)).